The sequence spans 257 residues: Type III pantothenate kinase (257 aa).

An ATP-binding site is contributed by 11-18 (DSGNTAIK). Residues tyrosine 96 and 103-106 (GCDR) contribute to the substrate site. Aspartate 105 functions as the Proton acceptor in the catalytic mechanism. Aspartate 125 lines the K(+) pocket. Threonine 128 is a binding site for ATP. Substrate is bound at residue threonine 179.

The protein belongs to the type III pantothenate kinase family. Homodimer. It depends on NH4(+) as a cofactor. K(+) is required as a cofactor.

The protein resides in the cytoplasm. The catalysed reaction is (R)-pantothenate + ATP = (R)-4'-phosphopantothenate + ADP + H(+). It functions in the pathway cofactor biosynthesis; coenzyme A biosynthesis; CoA from (R)-pantothenate: step 1/5. Its function is as follows. Catalyzes the phosphorylation of pantothenate (Pan), the first step in CoA biosynthesis. This is Type III pantothenate kinase from Nitrosomonas eutropha (strain DSM 101675 / C91 / Nm57).